We begin with the raw amino-acid sequence, 428 residues long: Putative zinc metalloprotease LL2128 (428 aa).

Residue histidine 19 participates in Zn(2+) binding. The active site involves glutamate 20. Residue histidine 23 participates in Zn(2+) binding. Transmembrane regions (helical) follow at residues 188 to 210 (GPLN…QGGV), 354 to 376 (IVYL…IPVL), and 401 to 423 (IITM…NDIL). Residues 188–282 (GPLNNFILGI…SETLSVTPKK (95 aa)) form the PDZ domain.

Belongs to the peptidase M50B family. Requires Zn(2+) as cofactor.

It is found in the cell membrane. This chain is Putative zinc metalloprotease LL2128, found in Lactococcus lactis subsp. lactis (strain IL1403) (Streptococcus lactis).